A 300-amino-acid polypeptide reads, in one-letter code: Inosose dehydratase (300 aa).

The protein belongs to the IolE/MocC family. Glutathione is required as a cofactor. Requires Co(2+) as cofactor. It depends on Mn(2+) as a cofactor.

The enzyme catalyses scyllo-inosose = 3D-3,5/4-trihydroxycyclohexane-1,2-dione + H2O. It functions in the pathway polyol metabolism; myo-inositol degradation into acetyl-CoA; acetyl-CoA from myo-inositol: step 2/7. Its function is as follows. Catalyzes the dehydration of inosose (2-keto-myo-inositol, 2KMI or 2,4,6/3,5-pentahydroxycyclohexanone) to 3D-(3,5/4)-trihydroxycyclohexane-1,2-dione (D-2,3-diketo-4-deoxy-epi-inositol). The polypeptide is Inosose dehydratase (Lactiplantibacillus plantarum (strain ATCC BAA-793 / NCIMB 8826 / WCFS1) (Lactobacillus plantarum)).